We begin with the raw amino-acid sequence, 240 residues long: Putative peptidoglycan hydrolase Rv2525c (240 aa).

Residues 1–33 constitute a signal peptide (tat-type signal); it reads MSVSRRDVLKFAAATPGVLGLGVVASSLRAAPA.

In terms of processing, predicted to be exported by the Tat system. The position of the signal peptide cleavage has not been experimentally proven.

Its subcellular location is the secreted. The catalysed reaction is Hydrolysis of (1-&gt;4)-beta-linkages between N-acetylmuramic acid and N-acetyl-D-glucosamine residues in a peptidoglycan and between N-acetyl-D-glucosamine residues in chitodextrins.. It functions in the pathway cell wall degradation; peptidoglycan degradation. In terms of biological role, may function as a peptidoglycan hydrolase with glycosidase activity. In vitro, displays esterase activity toward p-nitrophenyl esters of various acyl chain length (C4 to C16), with a preference for p-nitrophenyl butyrate (C4). This is Putative peptidoglycan hydrolase Rv2525c from Mycobacterium tuberculosis (strain ATCC 25618 / H37Rv).